A 157-amino-acid chain; its full sequence is Ribosome maturation factor RimP (157 aa).

Belongs to the RimP family.

Its subcellular location is the cytoplasm. Required for maturation of 30S ribosomal subunits. The protein is Ribosome maturation factor RimP of Thermobifida fusca (strain YX).